The sequence spans 1302 residues: Cingulin-like protein 1 (1302 aa).

The interval 1–554 is head; it reads MELYFGEYQH…ELTQQTNEET (554 aa). The short motif at 37–51 is the ZIM element; the sequence is AGSYGVSIRVQGIDG. Residues 75–104 are disordered; the sequence is PFPPPVINNLPLHSSNGSVPKENSEELQLP. Phosphoserine is present on residues Ser-112 and Ser-202. Disordered regions lie at residues 186-209, 251-305, and 364-392; these read KKPWTCFPKPSNSQPTSPSLEDPA, FTSG…TPTS, and PGLQRRGRSGKRNRINTDDRKRSRSVDSA. Positions 195-204 are enriched in polar residues; that stretch reads PSNSQPTSPS. Residues 264–282 are compositionally biased toward basic and acidic residues; that stretch reads AHPETKKTRPDVLPFRRQD. Phosphoserine occurs at positions 283, 297, and 298. Positions 296-305 are enriched in low complexity; the sequence is SSSSSTTPTS. Positions 366–377 are enriched in basic residues; that stretch reads LQRRGRSGKRNR. Basic and acidic residues predominate over residues 378-388; the sequence is INTDDRKRSRS. A phosphoserine mark is found at Ser-388, Ser-391, and Ser-486. Residues 604 to 1258 adopt a coiled-coil conformation; that stretch reads NSTSEVKDLL…QLNSMKKDLR (655 aa). Basic and acidic residues predominate over residues 655-664; it reads RSQHNEKVEE. The segment at 655 to 675 is disordered; that stretch reads RSQHNEKVEENSTLQQRLEES. Position 708 is a phosphoserine (Ser-708). Disordered stretches follow at residues 903 to 929 and 1263 to 1287; these read AAQGNLSQTTQEQKQLSEKLKEESEQK and PSKVLDDMDDDDDLSTDGGSLYEAP. Residues 917–929 show a composition bias toward basic and acidic residues; sequence QLSEKLKEESEQK. Positions 1263 to 1302 are tail; that stretch reads PSKVLDDMDDDDDLSTDGGSLYEAPVSYTFSKDSTVASQI.

This sequence belongs to the cingulin family. As to quaternary structure, homodimer or oligomer. Interacts with CD2AP and SH3BP1; probably part of a complex at cell junctions. Smooth muscle, spleen, testis, fetal brain, amygdala, corpus callosum, cerebellum, thalamus and subthalamic nucleus of adult brain.

It localises to the cell junction. The protein localises to the tight junction. Its function is as follows. May be involved in anchoring the apical junctional complex, especially tight junctions, to actin-based cytoskeletons. This chain is Cingulin-like protein 1 (CGNL1), found in Homo sapiens (Human).